The primary structure comprises 208 residues: N-(5'-phosphoribosyl)anthranilate isomerase (208 aa).

The protein belongs to the TrpF family.

It catalyses the reaction N-(5-phospho-beta-D-ribosyl)anthranilate = 1-(2-carboxyphenylamino)-1-deoxy-D-ribulose 5-phosphate. Its pathway is amino-acid biosynthesis; L-tryptophan biosynthesis; L-tryptophan from chorismate: step 3/5. The protein is N-(5'-phosphoribosyl)anthranilate isomerase of Lactiplantibacillus plantarum (strain ATCC BAA-793 / NCIMB 8826 / WCFS1) (Lactobacillus plantarum).